The chain runs to 192 residues: LexA repressor (192 aa).

The H-T-H motif DNA-binding region spans 15–35 (RAEIARELGFRSANAAEEHLK). Residues Ser-109 and Lys-146 each act as for autocatalytic cleavage activity in the active site.

This sequence belongs to the peptidase S24 family. In terms of assembly, homodimer.

It catalyses the reaction Hydrolysis of Ala-|-Gly bond in repressor LexA.. Represses a number of genes involved in the response to DNA damage (SOS response), including recA and lexA. In the presence of single-stranded DNA, RecA interacts with LexA causing an autocatalytic cleavage which disrupts the DNA-binding part of LexA, leading to derepression of the SOS regulon and eventually DNA repair. The polypeptide is LexA repressor (Photobacterium profundum (strain SS9)).